Consider the following 331-residue polypeptide: Cytosolic Fe-S cluster assembly factor CFD1 (331 aa).

ATP is bound at residue 25 to 32 (GKGGVGKS). [4Fe-4S] cluster is bound by residues C211 and C214.

The protein belongs to the Mrp/NBP35 ATP-binding proteins family. NUBP2/CFD1 subfamily. As to quaternary structure, heterotetramer of 2 NBP35 and 2 CFD1 chains. The cofactor is [4Fe-4S] cluster.

Its subcellular location is the cytoplasm. Component of the cytosolic iron-sulfur (Fe/S) protein assembly (CIA) machinery. Required for maturation of extramitochondrial Fe-S proteins. The NBP35-CFD1 heterotetramer forms a Fe-S scaffold complex, mediating the de novo assembly of an Fe-S cluster and its transfer to target apoproteins. The protein is Cytosolic Fe-S cluster assembly factor CFD1 of Cryptococcus neoformans var. neoformans serotype D (strain B-3501A) (Filobasidiella neoformans).